The following is a 692-amino-acid chain: Follicle-stimulating hormone receptor (692 aa).

The signal sequence occupies residues 1-17; it reads MALLLVSLLAFLGTGSG. Disulfide bonds link cysteine 18–cysteine 25 and cysteine 23–cysteine 32. In terms of domain architecture, LRRNT spans 18–46; that stretch reads CHHWLCHCSNRVFLCQDSKVTEIPTDLPR. The Extracellular portion of the chain corresponds to 18–365; it reads CHHWLCHCSN…EDIMGYNILR (348 aa). LRR repeat units lie at residues 49–72, 73–97, 98–118, 119–143, 144–169, 170–192, 193–216, 217–240, and 241–259; these read IELRFVLTKLRVIPKGSFAGFGDL, EKIEISQNDVLEVIEADVFSNLPKL, HEIRIEKANNLLYINPEAFQN, LPSLRYLLISNTGIKHLPAVHKIQS, LQKVLLDIQDNINIHIVARNSFMGLS, FESVILWLSKNGIEEIHNCAFNG, TQLDELNLSDNNNLEELPNDVFQG, ASGPVILDISRTKVHSLPNHGLEN, and LKKLRARSTYRLKKLPNLD. N-linked (GlcNAc...) asparagine glycosylation is found at asparagine 191 and asparagine 199. Disulfide bonds link cysteine 275–cysteine 345, cysteine 276–cysteine 292, cysteine 276–cysteine 355, and cysteine 292–cysteine 337. N-linked (GlcNAc...) asparagine glycosylation occurs at asparagine 293. Sulfotyrosine is present on tyrosine 334. A helical transmembrane segment spans residues 366–386; the sequence is VLIWFISILAITGNTTVLVVL. The Cytoplasmic portion of the chain corresponds to 387–397; it reads TTSQYKLTVPR. Residues 398-420 traverse the membrane as a helical segment; the sequence is FLMCNLAFADLCIGIYLLLIASV. Topologically, residues 421-442 are extracellular; the sequence is DIHTKSQYHNYAIDWQTGAGCD. A disulfide bridge connects residues cysteine 441 and cysteine 516. Residues 443-464 form a helical membrane-spanning segment; sequence AAGFFTVFASELSVYTLTAITL. Residues 465 to 484 lie on the Cytoplasmic side of the membrane; that stretch reads ERWHTITHAMQLECKVQLRH. Residues 485–507 form a helical membrane-spanning segment; it reads AASVMVLGWTFAFAAALFPIFGI. Residues 508 to 527 lie on the Extracellular side of the membrane; sequence SSYMKVSICLPMDIDSPLSQ. A helical membrane pass occupies residues 528-549; the sequence is LYVMALLVLNVLAFVVICGCYT. Residues 550-572 are Cytoplasmic-facing; sequence HIYLTVRNPTIVSSSSDTKIAKR. The helical transmembrane segment at 573-596 threads the bilayer; sequence MATLIFTDFLCMAPISFFAISASL. Over 597–607 the chain is Extracellular; the sequence is KVPLITVSKAK. The chain crosses the membrane as a helical span at residues 608-629; it reads ILLVLFYPINSCANPFLYAIFT. Over 630–692 the chain is Cytoplasmic; that stretch reads KNFRRDFFIL…LVPLNHSSQN (63 aa).

Belongs to the G-protein coupled receptor 1 family. FSH/LSH/TSH subfamily. In terms of assembly, homotrimer. Functions as a homotrimer binding the FSH hormone heterodimer composed of CGA and FSHB. Interacts with ARRB2. Interacts with APPL2; interaction is independent of follicle stimulating hormone stimulation. In terms of processing, N-glycosylated; indirectly required for FSH-binding, possibly via a conformational change that allows high affinity binding of hormone. Sulfated. Sertoli cells and ovarian granulosa cells.

It localises to the cell membrane. G protein-coupled receptor for follitropin, the follicle-stimulating hormone. Through cAMP production activates the downstream PI3K-AKT and ERK1/ERK2 signaling pathways. The protein is Follicle-stimulating hormone receptor (Fshr) of Rattus norvegicus (Rat).